The sequence spans 396 residues: Tryptophan synthase beta chain (396 aa).

Lys86 bears the N6-(pyridoxal phosphate)lysine mark.

This sequence belongs to the TrpB family. As to quaternary structure, tetramer of two alpha and two beta chains. It depends on pyridoxal 5'-phosphate as a cofactor.

The catalysed reaction is (1S,2R)-1-C-(indol-3-yl)glycerol 3-phosphate + L-serine = D-glyceraldehyde 3-phosphate + L-tryptophan + H2O. It participates in amino-acid biosynthesis; L-tryptophan biosynthesis; L-tryptophan from chorismate: step 5/5. Its function is as follows. The beta subunit is responsible for the synthesis of L-tryptophan from indole and L-serine. In Aliivibrio fischeri (strain ATCC 700601 / ES114) (Vibrio fischeri), this protein is Tryptophan synthase beta chain.